Consider the following 228-residue polypeptide: Heptaprenylglyceryl phosphate synthase (228 aa).

Lys-12 contributes to the sn-glycerol 1-phosphate binding site. Residues Asp-14 and Thr-40 each coordinate Mg(2+). Sn-glycerol 1-phosphate contacts are provided by residues 159–164 (YLEYSG), Gly-189, and 209–210 (GN).

It belongs to the GGGP/HepGP synthase family. Group I subfamily. Homodimer. It depends on Mg(2+) as a cofactor.

The catalysed reaction is sn-glycerol 1-phosphate + all-trans-heptaprenyl diphosphate = 3-heptaprenyl-sn-glycero-1-phosphate + diphosphate. Its pathway is membrane lipid metabolism; glycerophospholipid metabolism. Functionally, prenyltransferase that catalyzes in vivo the transfer of the heptaprenyl moiety of heptaprenyl pyrophosphate (HepPP; 35 carbon atoms) to the C3 hydroxyl of sn-glycerol-1-phosphate (G1P), producing heptaprenylglyceryl phosphate (HepGP). This reaction is an ether-bond-formation step in the biosynthesis of archaea-type G1P-based membrane lipids found in Bacillales. This Geobacillus sp. (strain WCH70) protein is Heptaprenylglyceryl phosphate synthase.